We begin with the raw amino-acid sequence, 589 residues long: Aspartate--tRNA(Asp/Asn) ligase (589 aa).

Glu176 lines the L-aspartate pocket. The segment at 200–203 is aspartate; sequence QLFK. L-aspartate is bound at residue Arg222. ATP-binding positions include 222–224 and Gln231; that span reads RDE. His450 contacts L-aspartate. Glu484 lines the ATP pocket. Arg491 contributes to the L-aspartate binding site. 536–539 serves as a coordination point for ATP; that stretch reads GLDR.

The protein belongs to the class-II aminoacyl-tRNA synthetase family. Type 1 subfamily. As to quaternary structure, homodimer.

Its subcellular location is the cytoplasm. It catalyses the reaction tRNA(Asx) + L-aspartate + ATP = L-aspartyl-tRNA(Asx) + AMP + diphosphate. In terms of biological role, aspartyl-tRNA synthetase with relaxed tRNA specificity since it is able to aspartylate not only its cognate tRNA(Asp) but also tRNA(Asn). Reaction proceeds in two steps: L-aspartate is first activated by ATP to form Asp-AMP and then transferred to the acceptor end of tRNA(Asp/Asn). This chain is Aspartate--tRNA(Asp/Asn) ligase, found in Bacillus cytotoxicus (strain DSM 22905 / CIP 110041 / 391-98 / NVH 391-98).